Reading from the N-terminus, the 174-residue chain is Probable carboxylesterase Culp5 (174 aa).

Catalysis depends on serine 67, which acts as the Nucleophile. An intrachain disulfide couples cysteine 137 to cysteine 144. Residue aspartate 141 is part of the active site. Histidine 153 functions as the Proton donor/acceptor in the catalytic mechanism.

This sequence belongs to the cutinase family.

In terms of biological role, does not exhibit cutinase activity. The chain is Probable carboxylesterase Culp5 from Mycobacterium tuberculosis (strain ATCC 25618 / H37Rv).